The sequence spans 588 residues: Proline--tRNA ligase (588 aa).

It belongs to the class-II aminoacyl-tRNA synthetase family. ProS type 1 subfamily. Homodimer.

It is found in the cytoplasm. The catalysed reaction is tRNA(Pro) + L-proline + ATP = L-prolyl-tRNA(Pro) + AMP + diphosphate. In terms of biological role, catalyzes the attachment of proline to tRNA(Pro) in a two-step reaction: proline is first activated by ATP to form Pro-AMP and then transferred to the acceptor end of tRNA(Pro). As ProRS can inadvertently accommodate and process non-cognate amino acids such as alanine and cysteine, to avoid such errors it has two additional distinct editing activities against alanine. One activity is designated as 'pretransfer' editing and involves the tRNA(Pro)-independent hydrolysis of activated Ala-AMP. The other activity is designated 'posttransfer' editing and involves deacylation of mischarged Ala-tRNA(Pro). The misacylated Cys-tRNA(Pro) is not edited by ProRS. The sequence is that of Proline--tRNA ligase from Helicobacter hepaticus (strain ATCC 51449 / 3B1).